Reading from the N-terminus, the 839-residue chain is uncharacterized protein (839 aa).

3 disordered regions span residues 504 to 611, 627 to 646, and 682 to 839; these read TVSP…NVVN, KNNNSSSNDNEYKNSNDNHC, and NHNY…SLGS. Positions 509-611 are enriched in low complexity; it reads GNNNVTGDVD…EGSNNCNVVN (103 aa). Residues 636 to 646 are compositionally biased toward basic and acidic residues; it reads NEYKNSNDNHC. Low complexity-rich tracts occupy residues 689–704 and 713–753; these read NGNNENDCKNNNNNNN and QQQP…NNNK. A coiled-coil region spans residues 726 to 764; it reads QQSQQQPQLQQKKQQIQEEQQNLNNNNKSIEDDEEAFNS. The span at 765–776 shows a compositional bias: basic and acidic residues; that stretch reads DDEHDHEDDSIR. A compositionally biased stretch (acidic residues) spans 809 to 823; it reads EDNDDDSDISDSDSD.

This is an uncharacterized protein from Dictyostelium discoideum (Social amoeba).